The chain runs to 316 residues: Beta-ketoacyl-[acyl-carrier-protein] synthase III (316 aa).

Catalysis depends on residues C112 and H243. The tract at residues 244-248 is ACP-binding; the sequence is QANLR. Residue N273 is part of the active site.

Belongs to the thiolase-like superfamily. FabH family. Homodimer.

Its subcellular location is the cytoplasm. The catalysed reaction is malonyl-[ACP] + acetyl-CoA + H(+) = 3-oxobutanoyl-[ACP] + CO2 + CoA. Its pathway is lipid metabolism; fatty acid biosynthesis. Catalyzes the condensation reaction of fatty acid synthesis by the addition to an acyl acceptor of two carbons from malonyl-ACP. Catalyzes the first condensation reaction which initiates fatty acid synthesis and may therefore play a role in governing the total rate of fatty acid production. Possesses both acetoacetyl-ACP synthase and acetyl transacylase activities. Its substrate specificity determines the biosynthesis of branched-chain and/or straight-chain of fatty acids. The polypeptide is Beta-ketoacyl-[acyl-carrier-protein] synthase III (Actinobacillus succinogenes (strain ATCC 55618 / DSM 22257 / CCUG 43843 / 130Z)).